We begin with the raw amino-acid sequence, 304 residues long: Probable 5-dehydro-4-deoxyglucarate dehydratase (304 aa).

It belongs to the DapA family.

The enzyme catalyses 5-dehydro-4-deoxy-D-glucarate + H(+) = 2,5-dioxopentanoate + CO2 + H2O. It participates in carbohydrate acid metabolism; D-glucarate degradation; 2,5-dioxopentanoate from D-glucarate: step 2/2. This Rhodococcus jostii (strain RHA1) protein is Probable 5-dehydro-4-deoxyglucarate dehydratase.